A 103-amino-acid polypeptide reads, in one-letter code: Small ribosomal subunit protein uS10 (103 aa).

It belongs to the universal ribosomal protein uS10 family. As to quaternary structure, part of the 30S ribosomal subunit.

Functionally, involved in the binding of tRNA to the ribosomes. The chain is Small ribosomal subunit protein uS10 from Wigglesworthia glossinidia brevipalpis.